We begin with the raw amino-acid sequence, 444 residues long: 23S rRNA (uracil(1939)-C(5))-methyltransferase RlmD (444 aa).

One can recognise a TRAM domain in the interval 5-67; it reads RNRFDRTPFQ…RHFDEAKTVE (63 aa). [4Fe-4S] cluster is bound by residues C80, C86, C89, and C168. Residues Q276, F305, N310, E326, D353, and D374 each contribute to the S-adenosyl-L-methionine site. C400 serves as the catalytic Nucleophile.

The protein belongs to the class I-like SAM-binding methyltransferase superfamily. RNA M5U methyltransferase family. RlmD subfamily.

The catalysed reaction is uridine(1939) in 23S rRNA + S-adenosyl-L-methionine = 5-methyluridine(1939) in 23S rRNA + S-adenosyl-L-homocysteine + H(+). In terms of biological role, catalyzes the formation of 5-methyl-uridine at position 1939 (m5U1939) in 23S rRNA. The polypeptide is 23S rRNA (uracil(1939)-C(5))-methyltransferase RlmD (Xanthomonas oryzae pv. oryzae (strain MAFF 311018)).